A 267-amino-acid polypeptide reads, in one-letter code: 4-hydroxy-tetrahydrodipicolinate reductase (267 aa).

NAD(+)-binding positions include 8-13 (GAAGRM) and Glu-34. Arg-35 serves as a coordination point for NADP(+). NAD(+) is bound by residues 98–100 (GST) and 122–125 (APNM). His-155 acts as the Proton donor/acceptor in catalysis. His-156 serves as a coordination point for (S)-2,3,4,5-tetrahydrodipicolinate. Lys-159 (proton donor) is an active-site residue. 165–166 (GT) contacts (S)-2,3,4,5-tetrahydrodipicolinate.

Belongs to the DapB family.

It is found in the cytoplasm. The enzyme catalyses (S)-2,3,4,5-tetrahydrodipicolinate + NAD(+) + H2O = (2S,4S)-4-hydroxy-2,3,4,5-tetrahydrodipicolinate + NADH + H(+). It catalyses the reaction (S)-2,3,4,5-tetrahydrodipicolinate + NADP(+) + H2O = (2S,4S)-4-hydroxy-2,3,4,5-tetrahydrodipicolinate + NADPH + H(+). The protein operates within amino-acid biosynthesis; L-lysine biosynthesis via DAP pathway; (S)-tetrahydrodipicolinate from L-aspartate: step 4/4. Catalyzes the conversion of 4-hydroxy-tetrahydrodipicolinate (HTPA) to tetrahydrodipicolinate. In Citrifermentans bemidjiense (strain ATCC BAA-1014 / DSM 16622 / JCM 12645 / Bem) (Geobacter bemidjiensis), this protein is 4-hydroxy-tetrahydrodipicolinate reductase.